The chain runs to 316 residues: 4-hydroxy-3-methylbut-2-enyl diphosphate reductase (316 aa).

Cysteine 12 is a binding site for [4Fe-4S] cluster. (2E)-4-hydroxy-3-methylbut-2-enyl diphosphate is bound by residues histidine 41 and histidine 74. Dimethylallyl diphosphate contacts are provided by histidine 41 and histidine 74. Isopentenyl diphosphate is bound by residues histidine 41 and histidine 74. Cysteine 96 contributes to the [4Fe-4S] cluster binding site. A (2E)-4-hydroxy-3-methylbut-2-enyl diphosphate-binding site is contributed by histidine 124. A dimethylallyl diphosphate-binding site is contributed by histidine 124. Isopentenyl diphosphate is bound at residue histidine 124. Glutamate 126 (proton donor) is an active-site residue. (2E)-4-hydroxy-3-methylbut-2-enyl diphosphate is bound at residue threonine 167. [4Fe-4S] cluster is bound at residue cysteine 197. 4 residues coordinate (2E)-4-hydroxy-3-methylbut-2-enyl diphosphate: serine 225, serine 226, asparagine 227, and serine 269. 4 residues coordinate dimethylallyl diphosphate: serine 225, serine 226, asparagine 227, and serine 269. Serine 225, serine 226, asparagine 227, and serine 269 together coordinate isopentenyl diphosphate.

This sequence belongs to the IspH family. As to quaternary structure, homodimer. [4Fe-4S] cluster serves as cofactor.

The enzyme catalyses isopentenyl diphosphate + 2 oxidized [2Fe-2S]-[ferredoxin] + H2O = (2E)-4-hydroxy-3-methylbut-2-enyl diphosphate + 2 reduced [2Fe-2S]-[ferredoxin] + 2 H(+). It catalyses the reaction dimethylallyl diphosphate + 2 oxidized [2Fe-2S]-[ferredoxin] + H2O = (2E)-4-hydroxy-3-methylbut-2-enyl diphosphate + 2 reduced [2Fe-2S]-[ferredoxin] + 2 H(+). Its pathway is isoprenoid biosynthesis; dimethylallyl diphosphate biosynthesis; dimethylallyl diphosphate from (2E)-4-hydroxy-3-methylbutenyl diphosphate: step 1/1. The protein operates within isoprenoid biosynthesis; isopentenyl diphosphate biosynthesis via DXP pathway; isopentenyl diphosphate from 1-deoxy-D-xylulose 5-phosphate: step 6/6. Its function is as follows. Catalyzes the conversion of 1-hydroxy-2-methyl-2-(E)-butenyl 4-diphosphate (HMBPP) into a mixture of isopentenyl diphosphate (IPP) and dimethylallyl diphosphate (DMAPP). Acts in the terminal step of the DOXP/MEP pathway for isoprenoid precursor biosynthesis. The protein is 4-hydroxy-3-methylbut-2-enyl diphosphate reductase of Escherichia coli (strain ATCC 8739 / DSM 1576 / NBRC 3972 / NCIMB 8545 / WDCM 00012 / Crooks).